Here is a 123-residue protein sequence, read N- to C-terminus: Phospholipase A2 (123 aa).

7 disulfides stabilise this stretch: Cys-11-Cys-77, Cys-27-Cys-123, Cys-29-Cys-45, Cys-44-Cys-105, Cys-51-Cys-98, Cys-61-Cys-91, and Cys-84-Cys-96. Ca(2+)-binding residues include Tyr-28, Gly-30, and Gly-32. The active site involves His-48. A Ca(2+)-binding site is contributed by Asp-49. Asp-99 is a catalytic residue.

This sequence belongs to the phospholipase A2 family. As to quaternary structure, monomer or homodimer. The cofactor is Ca(2+). Activated by trypsin cleavage in the duodenum. Can also be activated by thrombin or autocatalytically.

The protein resides in the secreted. It carries out the reaction a 1,2-diacyl-sn-glycero-3-phosphocholine + H2O = a 1-acyl-sn-glycero-3-phosphocholine + a fatty acid + H(+). The catalysed reaction is 1,2-ditetradecanoyl-sn-glycero-3-phosphocholine + H2O = 1-tetradecanoyl-sn-glycero-3-phosphocholine + tetradecanoate + H(+). It catalyses the reaction 1,2-dihexadecanoyl-sn-glycero-3-phosphocholine + H2O = 1-hexadecanoyl-sn-glycero-3-phosphocholine + hexadecanoate + H(+). The enzyme catalyses 1-hexadecanoyl-2-(9Z-octadecenoyl)-sn-glycero-3-phosphocholine + H2O = 1-hexadecanoyl-sn-glycero-3-phosphocholine + (9Z)-octadecenoate + H(+). It carries out the reaction 1-hexadecanoyl-2-(5Z,8Z,11Z,14Z-eicosatetraenoyl)-sn-glycero-3-phosphocholine + H2O = 1-hexadecanoyl-sn-glycero-3-phosphocholine + (5Z,8Z,11Z,14Z)-eicosatetraenoate + H(+). The catalysed reaction is 1-hexadecanoyl-2-(9Z-octadecenoyl)-sn-glycero-3-phospho-(1'-sn-glycerol) + H2O = 1-hexadecanoyl-sn-glycero-3-phospho-(1'-sn-glycerol) + (9Z)-octadecenoate + H(+). It catalyses the reaction N-hexadecanoyl-1,2-di-(9Z-octadecenoyl)-sn-glycero-3-phosphoethanolamine + H2O = N-hexadecanoyl-1-(9Z-octadecenoyl)-sn-glycero-3-phosphoethanolamine + (9Z)-octadecenoate + H(+). The enzyme catalyses 1-hexadecanoyl-2-(9Z,12Z-octadecadienoyl)-sn-glycero-3-phosphoethanolamine + H2O = 1-hexadecanoyl-sn-glycero-3-phosphoethanolamine + (9Z,12Z)-octadecadienoate + H(+). It carries out the reaction N,1-dihexadecanoyl-2-(9Z,12Z-octadecadienoyl)-sn-glycero-3-phosphoethanolamine + H2O = N,1-dihexadecanoyl-sn-glycero-3-phosphoethanolamine + (9Z,12Z)-octadecadienoate + H(+). Its function is as follows. Secretory calcium-dependent phospholipase A2 that primarily targets dietary phospholipids in the intestinal tract. Hydrolyzes the ester bond of the fatty acyl group attached at sn-2 position of phospholipids (phospholipase A2 activity) with preference for phosphatidylethanolamines and phosphatidylglycerols over phosphatidylcholines. May play a role in the biosynthesis of N-acyl ethanolamines that regulate energy metabolism and inflammation in the intestinal tract. Hydrolyzes N-acyl phosphatidylethanolamines to N-acyl lysophosphatidylethanolamines, which are further cleaved by a lysophospholipase D to release N-acyl ethanolamines. May act in an autocrine and paracrine manner. Has anti-helminth activity in a process regulated by gut microbiota. Upon helminth infection of intestinal epithelia, directly affects phosphatidylethanolamine contents in the membrane of helminth larvae, likely controlling an array of phospholipid-mediated cellular processes such as membrane fusion and cell division while providing for better immune recognition, ultimately reducing larvae integrity and infectivity. The polypeptide is Phospholipase A2 (PLA2G1B) (Ovis aries (Sheep)).